The primary structure comprises 141 residues: Large ribosomal subunit protein uL16 (141 aa).

The protein belongs to the universal ribosomal protein uL16 family. In terms of assembly, part of the 50S ribosomal subunit.

In terms of biological role, binds 23S rRNA and is also seen to make contacts with the A and possibly P site tRNAs. The sequence is that of Large ribosomal subunit protein uL16 from Kosmotoga olearia (strain ATCC BAA-1733 / DSM 21960 / TBF 19.5.1).